The sequence spans 125 residues: Protein ApaG (125 aa).

The 125-residue stretch at 1-125 (MFTSSKVAIQ…FRLAIPTLIN (125 aa)) folds into the ApaG domain.

This chain is Protein ApaG, found in Proteus mirabilis (strain HI4320).